The following is a 105-amino-acid chain: Met repressor (105 aa).

The protein belongs to the MetJ family. Homodimer.

It is found in the cytoplasm. In terms of biological role, this regulatory protein, when combined with SAM (S-adenosylmethionine) represses the expression of the methionine regulon and of enzymes involved in SAM synthesis. The protein is Met repressor of Pectobacterium carotovorum subsp. carotovorum (strain PC1).